The sequence spans 200 residues: Recombination protein RecR (200 aa).

A C4-type zinc finger spans residues 57 to 72; that stretch reads CQHCRTFTENSLCDIC. The region spanning 81–176 is the Toprim domain; the sequence is GQLCIVETPA…NITRIAHGVP (96 aa).

The protein belongs to the RecR family.

Its function is as follows. May play a role in DNA repair. It seems to be involved in an RecBC-independent recombinational process of DNA repair. It may act with RecF and RecO. In Tolumonas auensis (strain DSM 9187 / NBRC 110442 / TA 4), this protein is Recombination protein RecR.